A 504-amino-acid polypeptide reads, in one-letter code: ATP synthase subunit alpha (504 aa).

Residue 171–178 (GDRQTGKT) coordinates ATP.

The protein belongs to the ATPase alpha/beta chains family. F-type ATPases have 2 components, CF(1) - the catalytic core - and CF(0) - the membrane proton channel. CF(1) has five subunits: alpha(3), beta(3), gamma(1), delta(1), epsilon(1). CF(0) has three main subunits: a(1), b(2) and c(9-12). The alpha and beta chains form an alternating ring which encloses part of the gamma chain. CF(1) is attached to CF(0) by a central stalk formed by the gamma and epsilon chains, while a peripheral stalk is formed by the delta and b chains.

Its subcellular location is the cell inner membrane. It carries out the reaction ATP + H2O + 4 H(+)(in) = ADP + phosphate + 5 H(+)(out). Produces ATP from ADP in the presence of a proton gradient across the membrane. The alpha chain is a regulatory subunit. This Helicobacter hepaticus (strain ATCC 51449 / 3B1) protein is ATP synthase subunit alpha.